We begin with the raw amino-acid sequence, 426 residues long: Adenylosuccinate synthetase (426 aa).

Residues 11 to 17 (GDEGKGK) and 39 to 41 (GHT) each bind GTP. Aspartate 12 serves as the catalytic Proton acceptor. The Mg(2+) site is built by aspartate 12 and glycine 39. IMP is bound by residues 12 to 15 (DEGK), 37 to 40 (NAGH), threonine 130, arginine 144, asparagine 226, threonine 241, and arginine 305. The active-site Proton donor is the histidine 40. Residue 301–307 (VTTGRKR) participates in substrate binding. GTP is bound by residues arginine 307, 333–335 (KLD), and 415–417 (GTG).

Belongs to the adenylosuccinate synthetase family. Homodimer. Requires Mg(2+) as cofactor.

It is found in the cytoplasm. The enzyme catalyses IMP + L-aspartate + GTP = N(6)-(1,2-dicarboxyethyl)-AMP + GDP + phosphate + 2 H(+). It functions in the pathway purine metabolism; AMP biosynthesis via de novo pathway; AMP from IMP: step 1/2. Its function is as follows. Plays an important role in the de novo pathway and in the salvage pathway of purine nucleotide biosynthesis. Catalyzes the first committed step in the biosynthesis of AMP from IMP. This chain is Adenylosuccinate synthetase, found in Meyerozyma guilliermondii (strain ATCC 6260 / CBS 566 / DSM 6381 / JCM 1539 / NBRC 10279 / NRRL Y-324) (Yeast).